Reading from the N-terminus, the 125-residue chain is Succinate dehydrogenase assembly factor 3, mitochondrial (125 aa).

The N-terminal 30 residues, 1-30, are a transit peptide targeting the mitochondrion; it reads MPGRHVSRVRALYKRVLQLHRVLPPDLKSL.

Belongs to the complex I LYR family. SDHAF3 subfamily. Interacts with SDHB within an SDHA-SDHB subcomplex.

It is found in the mitochondrion matrix. Its function is as follows. Plays an essential role in the assembly of succinate dehydrogenase (SDH), an enzyme complex (also referred to as respiratory complex II) that is a component of both the tricarboxylic acid (TCA) cycle and the mitochondrial electron transport chain, and which couples the oxidation of succinate to fumarate with the reduction of ubiquinone (coenzyme Q) to ubiquinol. Promotes maturation of the iron-sulfur protein subunit SDHB of the SDH catalytic dimer, protecting it from the deleterious effects of oxidants. May act together with SDHAF1. This is Succinate dehydrogenase assembly factor 3, mitochondrial from Homo sapiens (Human).